Consider the following 423-residue polypeptide: F-box/LRR-repeat protein 2 (423 aa).

One can recognise an F-box domain in the interval 9–55; sequence GLINKKLPKELLLRIFSFLDIVTLCRCAQISKAWNILALDGSNWQRI. LRR repeat units follow at residues 61-87, 88-113, 114-139, 140-165, 166-191, 192-217, 218-243, 244-269, 270-295, 296-321, 322-350, 351-375, and 376-401; these read QTDVEGRVVENISKRCGGFLRKLSLRG, CIGVGDSSLKTFAQNCRNIEHLNLNG, CTKITDSTCYSLSRFCSKLKHLDLTS, CVSITNSSLKGISEGCRHLEYLNLSW, CDQITKDGVEALVRGCRGLRALLLRG, CTQLEDEALKHIQNYCHELVSLNLQS, CSRVTDDGVVQLCRGCPRLQALCLSG, CGSLTDASLTALALNCPRLQILEAAR, CSHLTDAGFTLLARNCHDLEKMDLEE, CILITDRTLTQLSIHCPKLQALSLSH, CELITDDGILHLSNSPCGHERLRVLELDN, CLLITDVALEHLEHCRGLERLELYD, and CQQVTRAGIKRMRAQLPHVRVHAYFA. Residues 80–90 are interaction with Calmodulin; it reads LRKLSLRGCIG. Lys201 participates in a covalent cross-link: Glycyl lysine isopeptide (Lys-Gly) (interchain with G-Cter in ubiquitin). The residue at position 404 (Thr404) is a Phosphothreonine. Residue Cys420 is the site of S-geranylgeranyl cysteine attachment. Residues 420–423 carry the CAAX motif motif; sequence CVIL.

Part of the SCF (SKP1-CUL1-F-box) E3 ubiquitin-protein ligase complex SCF(FBXL2) composed of CUL1, SKP1, RBX1 and FBXL2. Interacts with calmodulin; may antagonize substrate ubiquitination by SCF(FBXL2). May interact with PIK3R1. Interacts with PTPN13. In terms of processing, phosphorylated by GSK-beta (GSK3B), promoting recognition by FBXO3, leading to its ubiquitination by the SCF(FBXO3) complex. Post-translationally, ubiquitinated at Lys-201 by the SCF(FBXO3) complex in response to lipopolysaccharide (LPS), leading to its degradation by the proteasome.

It localises to the membrane. It functions in the pathway protein modification; protein ubiquitination. In terms of biological role, calcium-activated substrate recognition component of the SCF (SKP1-cullin-F-box protein) E3 ubiquitin-protein ligase complex, SCF(FBXL2), which mediates the ubiquitination and subsequent proteasomal degradation of target proteins. Unlike many F-box proteins, FBXL2 does not seem to target phosphodegron within its substrates but rather calmodulin-binding motifs and is thereby antagonized by calmodulin. This is the case for the cyclins CCND2 and CCND3 which polyubiquitination and subsequent degradation are inhibited by calmodulin. Through CCND2 and CCND3 degradation induces cell-cycle arrest in G(0). SCF(FBXL2) also mediates PIK3R2 ubiquitination and proteasomal degradation thereby regulating phosphatidylinositol 3-kinase signaling and autophagy. PCYT1A monoubiquitination by SCF(FBXL2) and subsequent degradation regulates synthesis of phosphatidylcholine, which is utilized for formation of membranes and of pulmonary surfactant. The SCF(FBXL2) complex acts as a regulator of inflammation by mediating ubiquitination and degradation of TRAF proteins (TRAF1, TRAF2, TRAF3, TRAF4, TRAF5 and TRAF6). The SCF(FBXL2) complex acts as a negative regulator of the NLRP3 inflammasome by mediating ubiquitination and degradation of NLRP3. This chain is F-box/LRR-repeat protein 2, found in Bos taurus (Bovine).